Here is a 184-residue protein sequence, read N- to C-terminus: Probable cobalt-precorrin-6B C(15)-methyltransferase (decarboxylating) (184 aa).

S-adenosyl-L-methionine contacts are provided by residues Thr12, 36-40 (GCGTG), Asp59, and Ala87.

This sequence belongs to the methyltransferase superfamily. Archaeal-type CbiT family.

The enzyme catalyses Co-precorrin-6B + S-adenosyl-L-methionine = Co-precorrin-7 + S-adenosyl-L-homocysteine + CO2. It functions in the pathway cofactor biosynthesis; adenosylcobalamin biosynthesis; cob(II)yrinate a,c-diamide from sirohydrochlorin (anaerobic route): step 8/10. In terms of biological role, catalyzes the methylation of C-15 in cobalt-precorrin-6B followed by the decarboxylation of C-12 to form cobalt-precorrin-7. The sequence is that of Probable cobalt-precorrin-6B C(15)-methyltransferase (decarboxylating) from Methanosarcina mazei (strain ATCC BAA-159 / DSM 3647 / Goe1 / Go1 / JCM 11833 / OCM 88) (Methanosarcina frisia).